The following is a 150-amino-acid chain: SsrA-binding protein (150 aa).

It belongs to the SmpB family.

It is found in the cytoplasm. Its function is as follows. Required for rescue of stalled ribosomes mediated by trans-translation. Binds to transfer-messenger RNA (tmRNA), required for stable association of tmRNA with ribosomes. tmRNA and SmpB together mimic tRNA shape, replacing the anticodon stem-loop with SmpB. tmRNA is encoded by the ssrA gene; the 2 termini fold to resemble tRNA(Ala) and it encodes a 'tag peptide', a short internal open reading frame. During trans-translation Ala-aminoacylated tmRNA acts like a tRNA, entering the A-site of stalled ribosomes, displacing the stalled mRNA. The ribosome then switches to translate the ORF on the tmRNA; the nascent peptide is terminated with the 'tag peptide' encoded by the tmRNA and targeted for degradation. The ribosome is freed to recommence translation, which seems to be the essential function of trans-translation. This Borreliella afzelii (strain PKo) (Borrelia afzelii) protein is SsrA-binding protein.